The sequence spans 84 residues: Beta-defensin 119 (84 aa).

The signal sequence occupies residues 1–21; that stretch reads MKLLYLFLAILLAIEEPVISG. 2 disulfide bridges follow: Cys-35–Cys-49 and Cys-39–Cys-56.

This sequence belongs to the beta-defensin family.

It localises to the secreted. Has antibacterial activity. This is Beta-defensin 119 (DEFB119) from Pan troglodytes (Chimpanzee).